Consider the following 152-residue polypeptide: MRVLVQRVAHASVVVAGETIGKISRGLLLLVGVTHTDSQNDLEWMAKKILKLRIFEDDEGKMNRSVEDVGGAILAVSQFTLYGDARKGNRPSFLEAARPEQAQASYQDFVKMLKLLGSVPVETGQFAAHMEVSLLNDGPVTLMLESPTKEEK.

A Gly-cisPro motif, important for rejection of L-amino acids motif is present at residues 138-139; the sequence is GP.

This sequence belongs to the DTD family. As to quaternary structure, homodimer.

The protein localises to the cytoplasm. The catalysed reaction is glycyl-tRNA(Ala) + H2O = tRNA(Ala) + glycine + H(+). It catalyses the reaction a D-aminoacyl-tRNA + H2O = a tRNA + a D-alpha-amino acid + H(+). In terms of biological role, an aminoacyl-tRNA editing enzyme that deacylates mischarged D-aminoacyl-tRNAs. Also deacylates mischarged glycyl-tRNA(Ala), protecting cells against glycine mischarging by AlaRS. Acts via tRNA-based rather than protein-based catalysis; rejects L-amino acids rather than detecting D-amino acids in the active site. By recycling D-aminoacyl-tRNA to D-amino acids and free tRNA molecules, this enzyme counteracts the toxicity associated with the formation of D-aminoacyl-tRNA entities in vivo and helps enforce protein L-homochirality. This is D-aminoacyl-tRNA deacylase from Chloroherpeton thalassium (strain ATCC 35110 / GB-78).